The chain runs to 331 residues: D-alanine--D-alanine ligase (331 aa).

The 207-residue stretch at 122 to 328 folds into the ATP-grasp domain; sequence KLWYDAIGIP…FHEFLADCIE (207 aa). Position 152–207 (152–207) interacts with ATP; the sequence is AFDKWGKLFVKAARQGSSVGCYSVTKIEQLSDAIDKAFGFSHQVLVEKAVKPRELE. Mg(2+) contacts are provided by aspartate 282, glutamate 295, and asparagine 297.

It belongs to the D-alanine--D-alanine ligase family. Requires Mg(2+) as cofactor. Mn(2+) serves as cofactor.

It localises to the cytoplasm. The enzyme catalyses 2 D-alanine + ATP = D-alanyl-D-alanine + ADP + phosphate + H(+). It functions in the pathway cell wall biogenesis; peptidoglycan biosynthesis. In terms of biological role, cell wall formation. The chain is D-alanine--D-alanine ligase from Vibrio vulnificus (strain CMCP6).